The chain runs to 24 residues: U1-plectoxin-Pt1e (24 aa).

A disulfide bridge connects residues Cys-4 and Cys-18.

It belongs to the neurotoxin 02 (plectoxin) family. 02 (plectoxin) subfamily. In terms of processing, contains 5 disulfide bonds. In terms of tissue distribution, expressed by the venom gland.

Its subcellular location is the secreted. Potent toxin that may paralyze and/or kill insect pests such as H.virescens (lepidoptera), S.exigua (beet armyworm) and M.sexta (tobacco hornworm). In Plectreurys tristis (Spider), this protein is U1-plectoxin-Pt1e.